We begin with the raw amino-acid sequence, 292 residues long: ATP-dependent Clp protease proteolytic subunit 4, chloroplastic (292 aa).

The transit peptide at Met-1–Met-65 directs the protein to the chloroplast. Ser-66 carries the N-acetylserine modification. Residue Ser-158 is the Nucleophile of the active site. Residue His-183 is part of the active site.

This sequence belongs to the peptidase S14 family. As to quaternary structure, component of the chloroplastic Clp protease core complex which consist of at least 16 proteins: CLPP4 (3 copies), CLPP5 (3 copies), CLPR4 (2 copies), ClpP1 (1 copy), CLPP6 (1 copy), CLPR2 (1 copy), CLPT1 (1 copy), CLPT2 (1 copy) and 3 copies of CLPP3 and/or CLPR1 and/or CLPR3. Interacts with CHIP. The core complex is organized in two heptameric rings, one containing CLPP3,4,5,6 in a 1:2:3:1 ratio and the other CLPP1 and CLPR1,2,3,4 in a 3:1:1:1:1 ratio. Ubiquitinated by CHIP. Mostly expressed in leaves. Also detected in stems, and to a lower extent, in roots (at protein level).

Its subcellular location is the plastid. It localises to the chloroplast stroma. The catalysed reaction is Hydrolysis of proteins to small peptides in the presence of ATP and magnesium. alpha-casein is the usual test substrate. In the absence of ATP, only oligopeptides shorter than five residues are hydrolyzed (such as succinyl-Leu-Tyr-|-NHMec, and Leu-Tyr-Leu-|-Tyr-Trp, in which cleavage of the -Tyr-|-Leu- and -Tyr-|-Trp bonds also occurs).. Its function is as follows. Cleaves peptides in various proteins in a process that requires ATP hydrolysis. Has a chymotrypsin-like activity. Plays a major role in the degradation of misfolded proteins. Essential protein required for chloroplast development and integrity. Essential for Embryogenesis. This Arabidopsis thaliana (Mouse-ear cress) protein is ATP-dependent Clp protease proteolytic subunit 4, chloroplastic.